The sequence spans 734 residues: Photosystem I P700 chlorophyll a apoprotein A2 (734 aa).

8 helical membrane passes run 46 to 69 (IFAS…FHVA), 135 to 158 (LYTG…LHLQ), 175 to 199 (LNHH…HVAI), 273 to 291 (MAHH…GHMY), 330 to 353 (IHFQ…QHMY), 369 to 395 (AALY…IFFI), 417 to 439 (AIIS…LYVH), and 517 to 535 (FLVH…LILV). The [4Fe-4S] cluster site is built by cysteine 559 and cysteine 568. 2 helical membrane passes run 575–596 (AFYL…YWHW) and 643–665 (LSVW…MFLI). Chlorophyll a-binding residues include histidine 654, methionine 662, and tyrosine 670. Tryptophan 671 serves as a coordination point for phylloquinone. The chain crosses the membrane as a helical span at residues 707–727 (LVGLAHFSVGYIFTYAAFLIA).

Belongs to the PsaA/PsaB family. In terms of assembly, the PsaA/B heterodimer binds the P700 chlorophyll special pair and subsequent electron acceptors. PSI consists of a core antenna complex that captures photons, and an electron transfer chain that converts photonic excitation into a charge separation. The eukaryotic PSI reaction center is composed of at least 11 subunits. Requires P700 is a chlorophyll a/chlorophyll a' dimer, A0 is one or more chlorophyll a, A1 is one or both phylloquinones and FX is a shared 4Fe-4S iron-sulfur center. as cofactor.

It is found in the plastid. It localises to the chloroplast thylakoid membrane. The catalysed reaction is reduced [plastocyanin] + hnu + oxidized [2Fe-2S]-[ferredoxin] = oxidized [plastocyanin] + reduced [2Fe-2S]-[ferredoxin]. Its function is as follows. PsaA and PsaB bind P700, the primary electron donor of photosystem I (PSI), as well as the electron acceptors A0, A1 and FX. PSI is a plastocyanin-ferredoxin oxidoreductase, converting photonic excitation into a charge separation, which transfers an electron from the donor P700 chlorophyll pair to the spectroscopically characterized acceptors A0, A1, FX, FA and FB in turn. Oxidized P700 is reduced on the lumenal side of the thylakoid membrane by plastocyanin. The sequence is that of Photosystem I P700 chlorophyll a apoprotein A2 from Capsella bursa-pastoris (Shepherd's purse).